A 330-amino-acid chain; its full sequence is uncharacterized protein (330 aa).

The protein to H.influenzae HI_0461.

This is an uncharacterized protein from Escherichia coli (strain K12).